Here is a 230-residue protein sequence, read N- to C-terminus: MRLAQLSHESLNFPPPDRALREPNGLLAMGGDLSPQRLLNAYHRGIFPWFAAGDPILWWSPDPRAILLPQHFHLSRSMKRFHQKSPYRVTLNQRFRQVIEGCASDRQEGTWITYEVKLAWQRLHELGHAHSIEVWQDEELVGGMYGLALGQIFCGESMFSQGENASKTALLVFSRYFLQQGGKLIDCQVLNPHTQSLGAQEIPRASYLSYLHSLAFRPLSSECWSPQRLF.

It belongs to the L/F-transferase family.

The protein resides in the cytoplasm. It carries out the reaction N-terminal L-lysyl-[protein] + L-leucyl-tRNA(Leu) = N-terminal L-leucyl-L-lysyl-[protein] + tRNA(Leu) + H(+). It catalyses the reaction N-terminal L-arginyl-[protein] + L-leucyl-tRNA(Leu) = N-terminal L-leucyl-L-arginyl-[protein] + tRNA(Leu) + H(+). The enzyme catalyses L-phenylalanyl-tRNA(Phe) + an N-terminal L-alpha-aminoacyl-[protein] = an N-terminal L-phenylalanyl-L-alpha-aminoacyl-[protein] + tRNA(Phe). In terms of biological role, functions in the N-end rule pathway of protein degradation where it conjugates Leu, Phe and, less efficiently, Met from aminoacyl-tRNAs to the N-termini of proteins containing an N-terminal arginine or lysine. This is Leucyl/phenylalanyl-tRNA--protein transferase from Erwinia tasmaniensis (strain DSM 17950 / CFBP 7177 / CIP 109463 / NCPPB 4357 / Et1/99).